Here is a 197-residue protein sequence, read N- to C-terminus: MKQFIDFIPLLLFFIVYKLDPRPMEVAGHSFEFGGIYSATAMLIISSLVVYGALFLRQRKLKKGQWLTLIACLVFGGLTLTFHSETFLKWKAPVVNWLFALGFAGSHFIGDRVLIKRIMGHALTLPDAIWSRLNLAWIAFFLFCGAANLFVAFTFQDFWVDFKVFGSLGMTVIFLVAQGVYLSRHLHDDPSTSKPKD.

5 helical membrane-spanning segments follow: residues Ile-36–Leu-56, Gly-64–Ser-84, Trp-90–Gly-110, Leu-135–Phe-155, and Phe-162–Leu-182.

The protein belongs to the YciB family.

The protein localises to the cell inner membrane. Its function is as follows. Plays a role in cell envelope biogenesis, maintenance of cell envelope integrity and membrane homeostasis. In Pseudomonas putida (strain GB-1), this protein is Inner membrane-spanning protein YciB.